The following is an 84-amino-acid chain: DNA-directed RNA polymerase subunit Rpo5 (84 aa).

Belongs to the archaeal Rpo5/eukaryotic RPB5 RNA polymerase subunit family. In terms of assembly, part of the 13-subunit RNA polymerase.

It is found in the cytoplasm. The enzyme catalyses RNA(n) + a ribonucleoside 5'-triphosphate = RNA(n+1) + diphosphate. DNA-dependent RNA polymerase (RNAP) catalyzes the transcription of DNA into RNA using the four ribonucleoside triphosphates as substrates. Functionally, reconstitution experiments show this subunit is required for basic activity. This chain is DNA-directed RNA polymerase subunit Rpo5, found in Sulfolobus acidocaldarius (strain ATCC 33909 / DSM 639 / JCM 8929 / NBRC 15157 / NCIMB 11770).